Here is a 391-residue protein sequence, read N- to C-terminus: MTNNTKTITLNLGPQHPATHGVLRLILEMDGEVVNNADPHIGLLHRGTEKLIEHKTYLQAIPYFDRLDYVSPMCQEHAFALAVESLLECEVPRRAQFIRVLFSELTRILNHTLNIGSQALDIGATTPLLWLFEEREKIMEFYEHVSGSRMHSNYFRPGGVVADLPEGLLEDIDKFIEQFPPKLHDIESLLNENRLWKQRLVDIGVVSQKEAMDWGFSGPMLRGSGIAWDLRKSNPYDVYDEMDFKVPIGKNGDCYDRYFVRMLEMYESIKIIKQCIEKMPKGAIKTDDPKLTPPTRAKMKESMEAMIHHFKLYTEGYDVPAGETYKAVEAPKGEFGVYLYSRGGNRPYRCRIKAPGFAHLQGLDFMSQGHLMADVITIIATLDIVFGEIDR.

It belongs to the complex I 49 kDa subunit family. In terms of assembly, NDH-1 is composed of 14 different subunits. Subunits NuoB, C, D, E, F, and G constitute the peripheral sector of the complex.

The protein resides in the cell inner membrane. The catalysed reaction is a quinone + NADH + 5 H(+)(in) = a quinol + NAD(+) + 4 H(+)(out). Its function is as follows. NDH-1 shuttles electrons from NADH, via FMN and iron-sulfur (Fe-S) centers, to quinones in the respiratory chain. The immediate electron acceptor for the enzyme in this species is believed to be ubiquinone. Couples the redox reaction to proton translocation (for every two electrons transferred, four hydrogen ions are translocated across the cytoplasmic membrane), and thus conserves the redox energy in a proton gradient. This chain is NADH-quinone oxidoreductase subunit D, found in Rickettsia rickettsii (strain Iowa).